We begin with the raw amino-acid sequence, 338 residues long: Cytochrome bd ubiquinol oxidase subunit 2 (338 aa).

A run of 9 helical transmembrane segments spans residues 7 to 27 (LWFILVAVLFVGFFFLEGFDF), 50 to 70 (IGPFWDANEVWLLTGAGAIFA), 75 to 95 (WYATMLSGYYIPFVIVLLALM), 119 to 139 (VVFFGSLIPPFVLGVLFTTLF), 163 to 183 (ILGGVTVTLLCFQHGLMFITL), 196 to 216 (MAQKIMGVVFVAVLAFAALSA), 227 to 247 (EITIPLAVLIVICFMLAAVFI), 256 to 276 (FGMTGAGLALTVGMIFISLFP), and 306 to 326 (IAALTLLPFVIGSQIWSYYVF).

The protein belongs to the cytochrome ubiquinol oxidase subunit 2 family. As to quaternary structure, heterodimer of subunits I and II. The cofactor is heme b. It depends on heme d cis-diol as a cofactor.

It localises to the cell membrane. It carries out the reaction 2 a ubiquinol + O2(in) + 4 H(+)(in) = 2 a ubiquinone + 2 H2O(in) + 4 H(+)(out). The polypeptide is Cytochrome bd ubiquinol oxidase subunit 2 (cydB) (Bacillus subtilis (strain 168)).